Reading from the N-terminus, the 211-residue chain is Uracil phosphoribosyltransferase (211 aa).

5-phospho-alpha-D-ribose 1-diphosphate is bound by residues Arg78, Arg103, and 130 to 138 (DPMLATGGT). Uracil contacts are provided by residues Ile195 and 200–202 (GDA). Residue Asp201 participates in 5-phospho-alpha-D-ribose 1-diphosphate binding.

It belongs to the UPRTase family. Mg(2+) serves as cofactor.

The catalysed reaction is UMP + diphosphate = 5-phospho-alpha-D-ribose 1-diphosphate + uracil. It participates in pyrimidine metabolism; UMP biosynthesis via salvage pathway; UMP from uracil: step 1/1. Allosterically activated by GTP. Functionally, catalyzes the conversion of uracil and 5-phospho-alpha-D-ribose 1-diphosphate (PRPP) to UMP and diphosphate. This chain is Uracil phosphoribosyltransferase, found in Paenarthrobacter aurescens (strain TC1).